The following is a 229-amino-acid chain: Nectarin-1 (229 aa).

A signal peptide spans 1–32 (MAAFGINSKIFQSMEMAILFLLAISIDRYCFA). A disulfide bridge links C42 with C57. An N-linked (GlcNAc...) asparagine glycan is attached at N60. The 149-residue stretch at 69-217 (LAISKPGATN…TFQINTEDVQ (149 aa)) folds into the Cupin type-1 domain. 4 residues coordinate Mn(2+): H117, H119, E124, and H163.

As to quaternary structure, monomer. In the absence of manganese, it forms tetrameric and pentameric forms which show superoxide dismutase activity. Mn(2+) serves as cofactor. As to expression, nectary tissues and to a lower level ovary. Not detected in petals, stems, leaves, roots or other floral tissues.

It is found in the secreted. The protein resides in the extracellular space. The protein localises to the apoplast. The enzyme catalyses 2 superoxide + 2 H(+) = H2O2 + O2. Functionally, may interact with bacterial adhesins thereby protecting the reproductive tissues from microbial attack. Has no oxalate oxidase activity. The chain is Nectarin-1 (NECI) from Nicotiana langsdorffii x Nicotiana sanderae (Ornamental tobacco).